The following is a 465-amino-acid chain: Iron-sulfur cluster assembly SufBD family protein SE_0610 (465 aa).

This sequence belongs to the iron-sulfur cluster assembly SufBD family.

The chain is Iron-sulfur cluster assembly SufBD family protein SE_0610 from Staphylococcus epidermidis (strain ATCC 12228 / FDA PCI 1200).